The following is a 94-amino-acid chain: CRISPR-associated endoribonuclease Cas2 (94 aa).

Belongs to the CRISPR-associated endoribonuclease Cas2 protein family. E.coli-subtype subfamily. As to quaternary structure, homodimer. Part of the Cas1-Cas2 complex. Forms a hexamer with 2 Cas1 dimers sandwiching a Cas2 dimer. The DNA lies across a flat surface extending from 1 Cas1 dimer, across the Cas2 dimer and contacting the other Cas1 dimer. Only 1 Cas1 protein from each dimer is catalytic, the other interacts with the Cas2 dimer and possibly target DNA.

CRISPR (clustered regularly interspaced short palindromic repeat), is an adaptive immune system that provides protection against mobile genetic elements (viruses, transposable elements and conjugative plasmids). CRISPR clusters contain sequences complementary to antecedent mobile elements and target invading nucleic acids. CRISPR clusters are transcribed and processed into CRISPR RNA (crRNA). The Cas1-Cas2 complex is involved in CRISPR adaptation, the first stage of CRISPR immunity, being required for the addition/removal of CRISPR spacers at the leader end of the CRISPR locus. The Cas1-Cas2 complex introduces staggered nicks into both strands of the CRISPR array near the leader repeat and joins the 5'-ends of the repeat strands with the 3'-ends of the new spacer sequence. Spacer DNA integration requires supercoiled target DNA and 3'-OH ends on the inserted (spacer) DNA and probably initiates with a nucleophilic attack of the C 3'-OH end of the protospacer on the minus strand of the first repeat sequence. Expression of Cas1-Cas2 in a strain lacking both genes permits spacer acquisition. Cas2 not seen to bind DNA alone; the Cas1-Cas2 complex preferentially binds CRISPR-locus DNA. Highest binding is seen to a dual forked DNA complex with 3'-overhangs and a protospacer-adjacent motif-complement specifically positioned. The protospacer DNA lies across a flat surface extending from 1 Cas1 dimer, across the Cas2 dimer and contacting the other Cas1 dimer; the 23 bp-long ds section of the DNA is bracketed by 1 Tyr-22 from each of the Cas1 dimers. Cas1 cuts within the 3'-overhang, to generate a 33-nucleotide DNA that is probably incorporated into the CRISPR leader by a cut-and-paste mechanism. This subunit's probable nuclease activity is not required for spacer acquisition. The protein is CRISPR-associated endoribonuclease Cas2 (ygbF) of Escherichia coli (strain K12).